The chain runs to 485 residues: Probable outer membrane usher protein LpfC' (485 aa).

This sequence belongs to the fimbrial export usher family.

The protein localises to the cell outer membrane. In terms of biological role, part of the lpfABCC'DE fimbrial operon. LP fimbriae may participate in the interaction with eukaryotic cells by assisting in microcolony formation. Could be involved in the export and assembly of the fimbrial subunits across the outer membrane. The sequence is that of Probable outer membrane usher protein LpfC' (lpfC') from Escherichia coli O157:H7.